The primary structure comprises 222 residues: CASP-like protein 1E1 (222 aa).

At 1 to 59 (MEASRVKPGFNGVGMAAGSVNGSSRRPGPGLGYGYGYYMGSGAAAGGSGRAAQAPVDGC) the chain is on the cytoplasmic side. A helical transmembrane segment spans residues 60–80 (SVALRVFVVASTLVSAVVMGV). Over 81–110 (DRQTRTIQITITDALPPLEVPLTANWSYSS) the chain is Extracellular. Asn105 is a glycosylation site (N-linked (GlcNAc...) asparagine). Residues 111-131 (AFVYFVVANAMVCLFSAAALA) traverse the membrane as a helical segment. Residues 132-146 (ACRSRAAMVPVMVGD) lie on the Cytoplasmic side of the membrane. The chain crosses the membrane as a helical span at residues 147–167 (LLALALLYSAVGAAAEFGILG). The Extracellular segment spans residues 168–189 (ERGNSHVRWAKVCNVYGRFCDR). Residues 190-210 (AMAAVIVSLIGAFANLVLLML) form a helical membrane-spanning segment. At 211 to 222 (NILTIHKSSSYY) the chain is on the cytoplasmic side.

Belongs to the Casparian strip membrane proteins (CASP) family. Homodimer and heterodimers.

It is found in the cell membrane. The chain is CASP-like protein 1E1 from Sorghum bicolor (Sorghum).